We begin with the raw amino-acid sequence, 212 residues long: Pyridoxine/pyridoxamine 5'-phosphate oxidase (212 aa).

Substrate is bound by residues 8–11 and K66; that span reads RREY. FMN-binding positions include 61 to 66, 76 to 77, R82, K83, and Q105; these read RIVLLK and FT. Y123, R127, and S131 together coordinate substrate. Residues 140–141 and W185 each bind FMN; that span reads QS. Position 191–193 (191–193) interacts with substrate; that stretch reads RLH. R195 serves as a coordination point for FMN.

It belongs to the pyridoxamine 5'-phosphate oxidase family. As to quaternary structure, homodimer. FMN serves as cofactor.

The enzyme catalyses pyridoxamine 5'-phosphate + O2 + H2O = pyridoxal 5'-phosphate + H2O2 + NH4(+). It carries out the reaction pyridoxine 5'-phosphate + O2 = pyridoxal 5'-phosphate + H2O2. The protein operates within cofactor metabolism; pyridoxal 5'-phosphate salvage; pyridoxal 5'-phosphate from pyridoxamine 5'-phosphate: step 1/1. It participates in cofactor metabolism; pyridoxal 5'-phosphate salvage; pyridoxal 5'-phosphate from pyridoxine 5'-phosphate: step 1/1. Catalyzes the oxidation of either pyridoxine 5'-phosphate (PNP) or pyridoxamine 5'-phosphate (PMP) into pyridoxal 5'-phosphate (PLP). The chain is Pyridoxine/pyridoxamine 5'-phosphate oxidase from Shewanella putrefaciens (strain CN-32 / ATCC BAA-453).